We begin with the raw amino-acid sequence, 463 residues long: Siroheme synthase (463 aa).

The interval 1–203 (MDYLPLFHKL…GQGAEAERLL (203 aa)) is precorrin-2 dehydrogenase /sirohydrochlorin ferrochelatase. Residues 22–23 (EI) and 43–44 (PD) contribute to the NAD(+) site. Ser-128 is modified (phosphoserine). A uroporphyrinogen-III C-methyltransferase region spans residues 216 to 463 (GEVYLVGAGP…LAWFEGSQNS (248 aa)). Pro-225 serves as a coordination point for S-adenosyl-L-methionine. Residue Asp-248 is the Proton acceptor of the active site. Lys-270 functions as the Proton donor in the catalytic mechanism. Residues 301–303 (GGD), Ile-306, 331–332 (TA), Met-383, and Gly-412 each bind S-adenosyl-L-methionine.

It in the N-terminal section; belongs to the precorrin-2 dehydrogenase / sirohydrochlorin ferrochelatase family. In the C-terminal section; belongs to the precorrin methyltransferase family.

The catalysed reaction is uroporphyrinogen III + 2 S-adenosyl-L-methionine = precorrin-2 + 2 S-adenosyl-L-homocysteine + H(+). It carries out the reaction precorrin-2 + NAD(+) = sirohydrochlorin + NADH + 2 H(+). The enzyme catalyses siroheme + 2 H(+) = sirohydrochlorin + Fe(2+). Its pathway is cofactor biosynthesis; adenosylcobalamin biosynthesis; precorrin-2 from uroporphyrinogen III: step 1/1. It participates in cofactor biosynthesis; adenosylcobalamin biosynthesis; sirohydrochlorin from precorrin-2: step 1/1. The protein operates within porphyrin-containing compound metabolism; siroheme biosynthesis; precorrin-2 from uroporphyrinogen III: step 1/1. It functions in the pathway porphyrin-containing compound metabolism; siroheme biosynthesis; siroheme from sirohydrochlorin: step 1/1. Its pathway is porphyrin-containing compound metabolism; siroheme biosynthesis; sirohydrochlorin from precorrin-2: step 1/1. Its function is as follows. Multifunctional enzyme that catalyzes the SAM-dependent methylations of uroporphyrinogen III at position C-2 and C-7 to form precorrin-2 via precorrin-1. Then it catalyzes the NAD-dependent ring dehydrogenation of precorrin-2 to yield sirohydrochlorin. Finally, it catalyzes the ferrochelation of sirohydrochlorin to yield siroheme. The chain is Siroheme synthase from Pseudomonas putida (strain ATCC 700007 / DSM 6899 / JCM 31910 / BCRC 17059 / LMG 24140 / F1).